The following is a 119-amino-acid chain: MQFTKWFIALPLAVTALSGCSLLERLVYRIDINQGNYVDQQSVDQLKFGMSKDQVRFVLGSPMLVENGYPDTWYYIYHHTQGHNDPVQKNLIVKFNDGGKLVNVAGDFPAGDSFFEGVN.

Positions 1–19 (MQFTKWFIALPLAVTALSG) are cleaved as a signal peptide. Cys-20 carries the N-palmitoyl cysteine lipid modification. Cys-20 carries S-diacylglycerol cysteine lipidation.

The protein belongs to the BamE family. As to quaternary structure, part of the Bam complex.

The protein resides in the cell outer membrane. In terms of biological role, part of the outer membrane protein assembly complex, which is involved in assembly and insertion of beta-barrel proteins into the outer membrane. This Vibrio cholerae serotype O1 (strain ATCC 39541 / Classical Ogawa 395 / O395) protein is Outer membrane protein assembly factor BamE.